A 344-amino-acid polypeptide reads, in one-letter code: N-acetyl-gamma-glutamyl-phosphate reductase (344 aa).

Residue Cys-149 is part of the active site.

Belongs to the NAGSA dehydrogenase family. Type 1 subfamily.

The protein resides in the cytoplasm. The catalysed reaction is N-acetyl-L-glutamate 5-semialdehyde + phosphate + NADP(+) = N-acetyl-L-glutamyl 5-phosphate + NADPH + H(+). It participates in amino-acid biosynthesis; L-arginine biosynthesis; N(2)-acetyl-L-ornithine from L-glutamate: step 3/4. Its function is as follows. Catalyzes the NADPH-dependent reduction of N-acetyl-5-glutamyl phosphate to yield N-acetyl-L-glutamate 5-semialdehyde. The protein is N-acetyl-gamma-glutamyl-phosphate reductase of Acidithiobacillus ferrooxidans (strain ATCC 23270 / DSM 14882 / CIP 104768 / NCIMB 8455) (Ferrobacillus ferrooxidans (strain ATCC 23270)).